The primary structure comprises 273 residues: uncharacterized protein (273 aa).

Residues 7–27 (LTLGICLVLLIILIVGYVIMT) form a helical membrane-spanning segment.

This sequence belongs to the staphylococcal tandem lipoprotein family.

The protein localises to the cell membrane. This is an uncharacterized protein from Staphylococcus aureus (strain MSSA476).